A 366-amino-acid polypeptide reads, in one-letter code: Probable S-adenosyl-L-methionine-binding protein AF_0433 (366 aa).

The region spanning 6 to 136 is the TsaA-like domain; that stretch reads LRQVGVIRSP…YSSTIDSVGN (131 aa). S-adenosyl-L-methionine is bound by residues 23 to 25, 61 to 62, R85, and 116 to 119; these read PHQ, DR, and LDGT.

It belongs to the tRNA methyltransferase O family.

The polypeptide is Probable S-adenosyl-L-methionine-binding protein AF_0433 (Archaeoglobus fulgidus (strain ATCC 49558 / DSM 4304 / JCM 9628 / NBRC 100126 / VC-16)).